The following is a 105-amino-acid chain: Putative pterin-4-alpha-carbinolamine dehydratase (105 aa).

This sequence belongs to the pterin-4-alpha-carbinolamine dehydratase family.

The catalysed reaction is (4aS,6R)-4a-hydroxy-L-erythro-5,6,7,8-tetrahydrobiopterin = (6R)-L-erythro-6,7-dihydrobiopterin + H2O. The protein is Putative pterin-4-alpha-carbinolamine dehydratase of Sinorhizobium fredii (strain NBRC 101917 / NGR234).